The following is an 82-amino-acid chain: Delta-ctenitoxin-Pn2a (82 aa).

The first 17 residues, 1–17 (MKVAILFLSILVLAVAS), serve as a signal peptide directing secretion. The propeptide occupies 18 to 34 (ESIEESRDDFAVEELGR). 5 cysteine pairs are disulfide-bonded: C37–C51, C44–C57, C48–C80, C50–C65, and C59–C63.

This sequence belongs to the neurotoxin 03 (Tx2) family. 06 subfamily. As to expression, expressed by the venom gland.

Its subcellular location is the secreted. In terms of biological role, toxin that is known to potentiate erectile function. It binds voltage-dependently to sodium channels (Nav), inhibits the inactivation of the activated channels and decreases the peak inward current. The toxin delays inactivation of Nav1.2/SCN2A, Nav1.3/SCN3A, Nav1.4/SCN4A and Nav1.8/SCN10A, slows the inactivation process and decreases the sodium peak amplitude of Nav1.5/SCN5A and Nav1.6/SCN8A. In vivo, it enhances erectile function by inducing the release of nictric oxide (NO): it slows the sodium current, leading to depolarization, which leads to an increase in calcium influx (probably via activation of N-type calcium channels) which in turn activates neuronal NO synthase (nNOS/NOS1), inducing nitric oxide (NO) production. In a final step, NO activates soluble guanylate cyclase (GUCY1A1/GUCY1B1) which in turn increases cGMP formation, resulting in penile erection. It is noteworthy that the toxin does not provoke erection by inhibiting phosphodiesterase type 5 (PDE5A), an enzyme that hydrolysis cGMP. In vivo, it also causes scratching, lacrimation, hypersalivation, sweating and agitation followed by spastic paralysis of the anterior and posterior extremities and death at dose levels of 0.79 mg/mouse. It is insecticidal to the larval and adult forms of the house fly. The toxin also improves cavernosal relaxation in different models where erectile dysfunction is observed, such as deoxycorticosterone-acetate (DOCA)-salt hypertensive rats, mice models for type-1 diabetes, as well as elderly rats. This is Delta-ctenitoxin-Pn2a from Phoneutria nigriventer (Brazilian armed spider).